The chain runs to 358 residues: Alanine racemase (358 aa).

Catalysis depends on Lys35, which acts as the Proton acceptor; specific for D-alanine. At Lys35 the chain carries N6-(pyridoxal phosphate)lysine. Residue Arg130 participates in substrate binding. Catalysis depends on Tyr255, which acts as the Proton acceptor; specific for L-alanine. Met303 contacts substrate.

It belongs to the alanine racemase family. The cofactor is pyridoxal 5'-phosphate.

It carries out the reaction L-alanine = D-alanine. It functions in the pathway amino-acid biosynthesis; D-alanine biosynthesis; D-alanine from L-alanine: step 1/1. Catalyzes the interconversion of L-alanine and D-alanine. May also act on other amino acids. This chain is Alanine racemase (alr), found in Shewanella baltica (strain OS155 / ATCC BAA-1091).